A 187-amino-acid chain; its full sequence is UPF0340 protein SPG_0604 (187 aa).

It belongs to the UPF0340 family.

This is UPF0340 protein SPG_0604 from Streptococcus pneumoniae serotype 19F (strain G54).